Here is a 520-residue protein sequence, read N- to C-terminus: Glutamate--cysteine ligase (520 aa).

This sequence belongs to the glutamate--cysteine ligase type 1 family. Type 1 subfamily.

The enzyme catalyses L-cysteine + L-glutamate + ATP = gamma-L-glutamyl-L-cysteine + ADP + phosphate + H(+). It participates in sulfur metabolism; glutathione biosynthesis; glutathione from L-cysteine and L-glutamate: step 1/2. The sequence is that of Glutamate--cysteine ligase from Leptospira interrogans serogroup Icterohaemorrhagiae serovar copenhageni (strain Fiocruz L1-130).